Consider the following 138-residue polypeptide: MLQPKRTKFRKAFKGQINGQSKGGFTLSFGQFGLKALEPERVTARQIEATRRAITREMKRQGKVWIRVFPDVPVTAKPIEVRMGKGKGGVDRWVARVAPGRILFEIDGVPEDIARQALALGAAKLPIKTKVVKRIEGI.

It belongs to the universal ribosomal protein uL16 family. In terms of assembly, part of the 50S ribosomal subunit.

In terms of biological role, binds 23S rRNA and is also seen to make contacts with the A and possibly P site tRNAs. The chain is Large ribosomal subunit protein uL16 from Hyphomonas neptunium (strain ATCC 15444).